The following is a 468-amino-acid chain: Spliceosome-associated protein CWC27 homolog (468 aa).

S2 carries the post-translational modification N-acetylserine. The 156-residue stretch at 11-166 (TNGKVLLKTT…NPHRIKSCEV (156 aa)) folds into the PPIase cyclophilin-type domain. Disordered stretches follow at residues 204 to 382 (LLSF…EDQT) and 427 to 468 (RKVK…KERR). A coiled-coil region spans residues 206–229 (SFGEEAEEEEEEVNRVSQSMKGRS). Residues 231–241 (SSHDLLKDDPH) show a composition bias toward basic and acidic residues. The segment covering 256-268 (TGDLEDDAEDDSV) has biased composition (acidic residues). Composition is skewed to basic and acidic residues over residues 269-287 (EHDG…ERIA) and 302-342 (GDGE…AEKG). S273 is subject to Phosphoserine. Residues 309-342 (ASRSEELRKEARQLKRELLAAKQKKESATKAEKG) adopt a coiled-coil conformation. A Phosphoserine modification is found at S343. Composition is skewed to basic and acidic residues over residues 356–368 (EYRR…EALR) and 453–468 (RREE…KERR).

Belongs to the cyclophilin-type PPIase family. Part of the activated spliceosome B/catalytic step 1 spliceosome, one of the forms of the spliceosome which has a well-formed active site but still cannot catalyze the branching reaction and is composed at least of 52 proteins, the U2, U5 and U6 snRNAs and the pre-mRNA. Recruited during early steps of activated spliceosome B maturation, it is probably one of the first proteins released from this complex as he matures to the spliceosome C complex. Component of the minor spliceosome, which splices U12-type introns.

Its subcellular location is the nucleus. As part of the spliceosome, plays a role in pre-mRNA splicing. Probable inactive PPIase with no peptidyl-prolyl cis-trans isomerase activity. As a component of the minor spliceosome, involved in the splicing of U12-type introns in pre-mRNAs. In Rattus norvegicus (Rat), this protein is Spliceosome-associated protein CWC27 homolog.